Consider the following 435-residue polypeptide: Ribosomal protein uS12 methylthiotransferase RimO (435 aa).

The region spanning 3-115 (KKLHVVSLGC…IDELISQKKS (113 aa)) is the MTTase N-terminal domain. Positions 12, 46, 78, 146, 150, and 153 each coordinate [4Fe-4S] cluster. The Radical SAM core domain occupies 132 to 361 (TGSNYHAYIK…DAIVKKQQMK (230 aa)).

It belongs to the methylthiotransferase family. RimO subfamily. It depends on [4Fe-4S] cluster as a cofactor.

Its subcellular location is the cytoplasm. It carries out the reaction L-aspartate(89)-[ribosomal protein uS12]-hydrogen + (sulfur carrier)-SH + AH2 + 2 S-adenosyl-L-methionine = 3-methylsulfanyl-L-aspartate(89)-[ribosomal protein uS12]-hydrogen + (sulfur carrier)-H + 5'-deoxyadenosine + L-methionine + A + S-adenosyl-L-homocysteine + 2 H(+). Catalyzes the methylthiolation of an aspartic acid residue of ribosomal protein uS12. This is Ribosomal protein uS12 methylthiotransferase RimO from Nitratiruptor sp. (strain SB155-2).